The chain runs to 185 residues: Tetratricopeptide repeat protein 36 homolog (185 aa).

TPR repeat units follow at residues Ser-53–Ala-86, Val-88–Gln-119, and Cys-125–Phe-158.

This sequence belongs to the TTC36 family.

In Drosophila melanogaster (Fruit fly), this protein is Tetratricopeptide repeat protein 36 homolog.